Reading from the N-terminus, the 298-residue chain is MIYVENKDLVIPGEVLADDEYYSGRGTFKENGKICSSLMGLVSLRNKKIRVIPLKSKYVPKKGDVVIGKIKDVRFSMWDVDINSPYSGILPAFEVFGREKKELNKVFDVGDVLFLRVVDVDEVKKVKLGLKGRGMGKFRGGIIVDITPTKVPRLIGKKGSMINMIKDKTNCKIIVGQNGLVWVKGEEDMEQLTKDIIHMIEAEAHTSGLTNKVKNKLSLAIDGELPQEDDYSDDYEELEKPKLQNFKEELEQEEKEEQSKKDSTDFYKVIEELKKKNKKDKPLSYGNNSGNSYILNNR.

Positions 63–131 (GDVVIGKIKD…EVKKVKLGLK (69 aa)) constitute an S1 motif domain. Positions 139-197 (RGGIIVDITPTKVPRLIGKKGSMINMIKDKTNCKIIVGQNGLVWVKGEEDMEQLTKDII) constitute a KH domain. The interval 276-298 (KNKKDKPLSYGNNSGNSYILNNR) is disordered. Positions 285 to 298 (YGNNSGNSYILNNR) are enriched in polar residues.

It belongs to the RRP4 family. Component of the archaeal exosome complex. Forms a trimer of Rrp4 and/or Csl4 subunits. The trimer associates with a hexameric ring-like arrangement composed of 3 Rrp41-Rrp42 heterodimers.

It localises to the cytoplasm. Non-catalytic component of the exosome, which is a complex involved in RNA degradation. Increases the RNA binding and the efficiency of RNA degradation. Confers strong poly(A) specificity to the exosome. The polypeptide is Exosome complex component Rrp4 (Methanobrevibacter smithii (strain ATCC 35061 / DSM 861 / OCM 144 / PS)).